Reading from the N-terminus, the 115-residue chain is MGTRLLCWAALCLLGADHTGAGVSQTPSNKVTEKGKDVELRCDPISGHTALYWYRQSLGQGPEFLIYFQGTGAADDSGLPKDRFFAVRPEGSVSTLKIQRTEQGDSAAYLRASSL.

Residues 1–21 (MGTRLLCWAALCLLGADHTGA) form the signal peptide. The 94-residue stretch at 22 to 115 (GVSQTPSNKV…SAAYLRASSL (94 aa)) folds into the Ig-like domain.

Most probably, the alpha-beta TR is not assembled due to incorrect folding of the beta chain. Alpha-beta TR is a heterodimer composed of an alpha and beta chain; disulfide-linked. The alpha-beta TR is associated with the transmembrane signaling CD3 coreceptor proteins to form the TR-CD3 (TcR or TCR). The assembly of alpha-beta TR heterodimers with CD3 occurs in the endoplasmic reticulum where a single alpha-beta TR heterodimer associates with one CD3D-CD3E heterodimer, one CD3G-CD3E heterodimer and one CD247 homodimer forming a stable octameric structure. CD3D-CD3E and CD3G-CD3E heterodimers preferentially associate with TR alpha and TR beta chains, respectively. The association of the CD247 homodimer is the last step of TcR assembly in the endoplasmic reticulum and is required for transport to the cell surface.

It localises to the cell membrane. Probable non-functional open reading frame (ORF) of V region of the variable domain of T cell receptor (TR) beta chain. Non-functional ORF generally cannot participate in the synthesis of a productive T cell receptor (TR) chain due to altered V-(D)-J or switch recombination and/or splicing site (at mRNA level) and/or conserved amino acid change (protein level). Alpha-beta T cell receptors are antigen specific receptors which are essential to the immune response and are present on the cell surface of T lymphocytes. Recognize peptide-major histocompatibility (MH) (pMH) complexes that are displayed by antigen presenting cells (APC), a prerequisite for efficient T cell adaptive immunity against pathogens. Binding of alpha-beta TR to pMH complex initiates TR-CD3 clustering on the cell surface and intracellular activation of LCK that phosphorylates the ITAM motifs of CD3G, CD3D, CD3E and CD247 enabling the recruitment of ZAP70. In turn ZAP70 phosphorylates LAT, which recruits numerous signaling molecules to form the LAT signalosome. The LAT signalosome propagates signal branching to three major signaling pathways, the calcium, the mitogen-activated protein kinase (MAPK) kinase and the nuclear factor NF-kappa-B (NF-kB) pathways, leading to the mobilization of transcription factors that are critical for gene expression and essential for T cell growth and differentiation. The T cell repertoire is generated in the thymus, by V-(D)-J rearrangement. This repertoire is then shaped by intrathymic selection events to generate a peripheral T cell pool of self-MH restricted, non-autoaggressive T cells. Post-thymic interaction of alpha-beta TR with the pMH complexes shapes TR structural and functional avidity. This chain is Probable non-functional T cell receptor beta variable 7-3, found in Homo sapiens (Human).